The following is a 317-amino-acid chain: Transcription factor MYB35 (317 aa).

2 HTH myb-type domains span residues 9–65 (KSNV…RPDL) and 66–116 (KHDS…KKKL). 2 DNA-binding regions (H-T-H motif) span residues 37 to 61 (WSLI…TNYL) and 89 to 112 (WSSI…NTKL).

Inflorescences-specific. Accumulates in anthers, especially in tapetum and meiocytes/microsporocytes and microspores during anther development.

The protein resides in the nucleus. Functionally, required for anther development and early tapetal function during microspore maturation. Regulates callose dissolution required for microspores release from the tetrads. The sequence is that of Transcription factor MYB35 from Arabidopsis thaliana (Mouse-ear cress).